The chain runs to 224 residues: Urease accessory protein UreF (224 aa).

This sequence belongs to the UreF family. UreD, UreF and UreG form a complex that acts as a GTP-hydrolysis-dependent molecular chaperone, activating the urease apoprotein by helping to assemble the nickel containing metallocenter of UreC. The UreE protein probably delivers the nickel.

Its subcellular location is the cytoplasm. In terms of biological role, required for maturation of urease via the functional incorporation of the urease nickel metallocenter. This chain is Urease accessory protein UreF, found in Methylorubrum populi (strain ATCC BAA-705 / NCIMB 13946 / BJ001) (Methylobacterium populi).